The chain runs to 172 residues: Small ribosomal subunit protein uS5 (172 aa).

Residues 17–80 (LREKMISVNR…EQARRNMFKV (64 aa)) enclose the S5 DRBM domain.

It belongs to the universal ribosomal protein uS5 family. In terms of assembly, part of the 30S ribosomal subunit. Contacts proteins S4 and S8.

Its function is as follows. With S4 and S12 plays an important role in translational accuracy. Functionally, located at the back of the 30S subunit body where it stabilizes the conformation of the head with respect to the body. The protein is Small ribosomal subunit protein uS5 of Paraburkholderia phymatum (strain DSM 17167 / CIP 108236 / LMG 21445 / STM815) (Burkholderia phymatum).